The chain runs to 324 residues: UDP-N-acetylenolpyruvoylglucosamine reductase (324 aa).

Positions 39–220 (RTGGLAELFY…RAAMHEVALH (182 aa)) constitute an FAD-binding PCMH-type domain. The active site involves arginine 185. The active-site Proton donor is serine 234. The active site involves glutamate 304.

This sequence belongs to the MurB family. The cofactor is FAD.

The protein localises to the cytoplasm. The catalysed reaction is UDP-N-acetyl-alpha-D-muramate + NADP(+) = UDP-N-acetyl-3-O-(1-carboxyvinyl)-alpha-D-glucosamine + NADPH + H(+). It functions in the pathway cell wall biogenesis; peptidoglycan biosynthesis. Functionally, cell wall formation. The chain is UDP-N-acetylenolpyruvoylglucosamine reductase from Bartonella bacilliformis (strain ATCC 35685 / KC583 / Herrer 020/F12,63).